The sequence spans 361 residues: NADP-dependent alcohol dehydrogenase 7 (361 aa).

Zn(2+) is bound at residue C46. NADP(+) contacts are provided by G47 and H51. 6 residues coordinate Zn(2+): H68, C100, C103, C106, C114, and C164. Residues I189, G191, I192, S211, R212, K216, C251, S253, S256, I276, S300, and I302 each contribute to the NADP(+) site. Position 316 is a phosphoserine (S316). An NADP(+)-binding site is contributed by R349.

This sequence belongs to the zinc-containing alcohol dehydrogenase family. As to quaternary structure, homodimer. Zn(2+) serves as cofactor.

It carries out the reaction a primary alcohol + NADP(+) = an aldehyde + NADPH + H(+). The catalysed reaction is (E)-cinnamyl alcohol + NADP(+) = (E)-cinnamaldehyde + NADPH + H(+). The enzyme catalyses 3-methylbutanol + NADP(+) = 3-methylbutanal + NADPH + H(+). NADP-dependent alcohol dehydrogenase with a broad substrate specificity. The oxidative reactions are more than 100 times less efficient than the corresponding reductions, suggesting that the enzyme acts as an aldehyde reductase, rather than as an alcohol dehydrogenase. In Saccharomyces cerevisiae (strain ATCC 204508 / S288c) (Baker's yeast), this protein is NADP-dependent alcohol dehydrogenase 7 (ADH7).